Reading from the N-terminus, the 183-residue chain is Small ribosomal subunit protein uS4c (183 aa).

One can recognise an S4 RNA-binding domain in the interval 82-143 (MRLDNILFRL…KQRSKALIQN (62 aa)).

It belongs to the universal ribosomal protein uS4 family. Part of the 30S ribosomal subunit. Contacts protein S5. The interaction surface between S4 and S5 is involved in control of translational fidelity.

The protein resides in the plastid. It localises to the chloroplast. Functionally, one of the primary rRNA binding proteins, it binds directly to 16S rRNA where it nucleates assembly of the body of the 30S subunit. In terms of biological role, with S5 and S12 plays an important role in translational accuracy. In Aristea capitata, this protein is Small ribosomal subunit protein uS4c (rps4).